We begin with the raw amino-acid sequence, 73 residues long: Putative antitoxin VapB16 (73 aa).

It belongs to the UPF0330 family.

Its function is as follows. Possibly the antitoxin component of a type II toxin-antitoxin (TA) system. Its cognate toxin is VapC16 (Potential). This Archaeoglobus fulgidus (strain ATCC 49558 / DSM 4304 / JCM 9628 / NBRC 100126 / VC-16) protein is Putative antitoxin VapB16 (vapB16).